Consider the following 275-residue polypeptide: Phosphate import ATP-binding protein PstB 1 (275 aa).

An ABC transporter domain is found at 22–261; sequence FNVEGVKVYY…SPTEQMFNSP (240 aa). 54-61 serves as a coordination point for ATP; that stretch reads GPSGCGKS.

Belongs to the ABC transporter superfamily. Phosphate importer (TC 3.A.1.7) family. In terms of assembly, the complex is composed of two ATP-binding proteins (PstB), two transmembrane proteins (PstC and PstA) and a solute-binding protein (PstS).

Its subcellular location is the cell inner membrane. The enzyme catalyses phosphate(out) + ATP + H2O = ADP + 2 phosphate(in) + H(+). Its function is as follows. Part of the ABC transporter complex PstSACB involved in phosphate import. Responsible for energy coupling to the transport system. The polypeptide is Phosphate import ATP-binding protein PstB 1 (Trichormus variabilis (strain ATCC 29413 / PCC 7937) (Anabaena variabilis)).